Consider the following 881-residue polypeptide: Phosphoinositide 3-kinase regulatory subunit 5 (881 aa).

Positions 23–99 are heterodimerization; that stretch reads SRDAVSSRWA…APHIPPDSEL (77 aa). 2 disordered regions span residues 312 to 339 and 472 to 499; these read PVAS…ERDS and PQAK…KLQT. A compositionally biased stretch (acidic residues) spans 316–330; it reads ENEEDEEEEEEDVET. Positions 657–757 are interaction with G beta gamma proteins; it reads PILADMILYY…WNDVEKVCTS (101 aa).

Heterodimer. Interacts with a catalytic subunit and with G beta gamma proteins.

It is found in the nucleus. Its subcellular location is the cytoplasm. The protein resides in the cell membrane. Greatly activated by G gamma proteins. In terms of biological role, regulatory subunit of the PI3K gamma complex. The polypeptide is Phosphoinositide 3-kinase regulatory subunit 5 (PIK3R5) (Gallus gallus (Chicken)).